We begin with the raw amino-acid sequence, 582 residues long: Two-component response regulator ORR26 (582 aa).

The region spanning 11–126 is the Response regulatory domain; that stretch reads RVLVVDDDPT…ELRNIWQHVY (116 aa). Residue Asp-62 is modified to 4-aspartylphosphate. A compositionally biased stretch (basic and acidic residues) spans 166 to 182; sequence SDTMRKRKDVDKDHADQ. Residues 166 to 187 form a disordered region; it reads SDTMRKRKDVDKDHADQESSDG. Residues 189 to 248 constitute a DNA-binding region (myb-like GARP); it reads TVKKARVVWSVDLHQKFVNAVNQIGFDKVGPKKILDLMNVPGLTRENVASHLQKYRLYLS.

This sequence belongs to the ARR family. Type-B subfamily. In terms of processing, two-component system major event consists of a His-to-Asp phosphorelay between a sensor histidine kinase (HK) and a response regulator (RR). In plants, the His-to-Asp phosphorelay involves an additional intermediate named Histidine-containing phosphotransfer protein (HPt). This multistep phosphorelay consists of a His-Asp-His-Asp sequential transfer of a phosphate group between first a His and an Asp of the HK protein, followed by the transfer to a conserved His of the HPt protein and finally the transfer to an Asp in the receiver domain of the RR protein.

Its subcellular location is the nucleus. Functionally, transcriptional activator that binds specific DNA sequence. Functions as a response regulator involved in His-to-Asp phosphorelay signal transduction system. Phosphorylation of the Asp residue in the receiver domain activates the ability of the protein to promote the transcription of target genes. May directly activate some type-A response regulators in response to cytokinins. This Oryza sativa subsp. japonica (Rice) protein is Two-component response regulator ORR26.